Reading from the N-terminus, the 790-residue chain is Sorting nexin mvp1 (790 aa).

Composition is skewed to polar residues over residues 1-10 (MSLFGSSPPN) and 20-40 (KTAN…TRSG). Disordered regions lie at residues 1 to 62 (MSLF…RKQR), 215 to 342 (PNLS…SIHN), and 373 to 406 (AITG…HVRS). Pro residues predominate over residues 225 to 240 (PQRPVTPPKAPTPSPP). Residues 241 to 252 (KQQQQQQHQPPT) are compositionally biased toward low complexity. The segment covering 269–283 (DLHKGHNHGPLEHST) has biased composition (basic and acidic residues). Positions 297–319 (NDLNGNDAVSYSTSPEVTTTSSA) are enriched in polar residues. Composition is skewed to low complexity over residues 324–339 (TTST…GPSS) and 386–400 (QSVS…PNRS). In terms of domain architecture, PX spans 411-525 (EENILVTLMP…IMFLTVPTEL (115 aa)). Residues Arg-447, Ser-449, Lys-473, and Arg-492 each coordinate a 1,2-diacyl-sn-glycero-3-phospho-(1D-myo-inositol-3-phosphate).

It belongs to the sorting nexin family.

The protein resides in the cytoplasm. It localises to the membrane. Its function is as follows. Required for vacuolar protein sorting. The polypeptide is Sorting nexin mvp1 (vsp-1) (Neurospora crassa (strain ATCC 24698 / 74-OR23-1A / CBS 708.71 / DSM 1257 / FGSC 987)).